The primary structure comprises 367 residues: Aurora kinase (367 aa).

2 stretches are compositionally biased toward polar residues: residues 1 to 29 and 37 to 48; these read MQRNSLVNIKLNANSPSKKTTTRPNTSRI and HSPQQRNPNSKI. The disordered stretch occupies residues 1 to 52; that stretch reads MQRNSLVNIKLNANSPSKKTTTRPNTSRINKPWRISHSPQQRNPNSKIPSPV. S5 is subject to Phosphoserine; by autocatalysis. Residue S76 is modified to Phosphoserine. Residues 104–355 form the Protein kinase domain; it reads FELGKKLGKG…LGDVKMHPWI (252 aa). Residues 110 to 118 and K133 contribute to the ATP site; that span reads LGKGKFGKV. D227 (proton acceptor) is an active-site residue. The residue at position 260 (T260) is a Phosphothreonine; by autocatalysis.

It belongs to the protein kinase superfamily. Ser/Thr protein kinase family. Aurora subfamily. In terms of assembly, component of the CPC complex at least composed of IPL1, BIR1 and SLI15.

The protein localises to the nucleus. It is found in the cytoplasm. The protein resides in the cytoskeleton. Its subcellular location is the spindle. It localises to the chromosome. The protein localises to the centromere. It is found in the kinetochore. The catalysed reaction is L-seryl-[protein] + ATP = O-phospho-L-seryl-[protein] + ADP + H(+). It catalyses the reaction L-threonyl-[protein] + ATP = O-phospho-L-threonyl-[protein] + ADP + H(+). Component of the chromosomal passenger complex (CPC), a complex that acts as a key regulator of chromosome segregation and cytokinesis. Has a role in error-correction of aberrent kinetochore-microtubule attachments to ensure that sister kinetochores become bioriented and connect to opposite poles by promoting spindle assembly checkpoint signaling. Acts in opposition to the phosphatase PP1. Not required for kinetochore detachment from microtubules during replication of centromeric DNA. Phosphorylates histone H3 to form H3S10ph during mitosis and meiosis. Phosphorylates CNN1, which contributes to the enrichment of CNN1 on anaphase kinetochores. Phosphorylates RGD1. The polypeptide is Aurora kinase (IPL1) (Saccharomyces cerevisiae (strain ATCC 204508 / S288c) (Baker's yeast)).